The chain runs to 27 residues: Carcinustatin-20 (27 aa).

Leucine amide is present on Leu27.

This sequence belongs to the allatostatin family.

The protein resides in the secreted. In terms of biological role, may act as a neurotransmitter or neuromodulator. The protein is Carcinustatin-20 of Carcinus maenas (Common shore crab).